The following is a 536-amino-acid chain: ADP,ATP carrier protein 4 (536 aa).

Transmembrane regions (helical) follow at residues 44-64 (VLLF…LYVL), 77-97 (SILF…IVIV), 109-129 (MLEV…FVIW), 172-194 (TMLY…FSRA), 205-225 (KFLP…GLLT), 244-264 (FSQV…TSFF), 309-329 (VVAA…GIVL), 349-369 (AQII…THLI), and 378-398 (AITA…MVFF). Asparagine 400 and asparagine 421 each carry an N-linked (GlcNAc...) asparagine glycan. The next 2 membrane-spanning stretches (helical) occupy residues 465–485 (LGIN…TVVF) and 493–513 (VVSV…RSIL).

The protein belongs to the ADP/ATP translocase tlc family.

It is found in the cell membrane. Functionally, ATP transporter involved in the uptake of ATP from the host cell cytoplasm. Provides the microsporidian cell with host ATP in exchange for ADP. This is an obligate exchange system. This energy acquiring activity is an important component of microsporidian parasitism. This Encephalitozoon cuniculi (strain GB-M1) (Microsporidian parasite) protein is ADP,ATP carrier protein 4 (NTT4).